The chain runs to 110 residues: Phosphoribosyl-AMP cyclohydrolase (110 aa).

A Mg(2+)-binding site is contributed by Asp-80. Cys-81 contacts Zn(2+). Mg(2+) contacts are provided by Asp-82 and Asp-84. Zn(2+) is bound by residues Cys-97 and Cys-104.

The protein belongs to the PRA-CH family. In terms of assembly, homodimer. The cofactor is Mg(2+). Zn(2+) is required as a cofactor.

Its subcellular location is the cytoplasm. It carries out the reaction 1-(5-phospho-beta-D-ribosyl)-5'-AMP + H2O = 1-(5-phospho-beta-D-ribosyl)-5-[(5-phospho-beta-D-ribosylamino)methylideneamino]imidazole-4-carboxamide. It participates in amino-acid biosynthesis; L-histidine biosynthesis; L-histidine from 5-phospho-alpha-D-ribose 1-diphosphate: step 3/9. Functionally, catalyzes the hydrolysis of the adenine ring of phosphoribosyl-AMP. The polypeptide is Phosphoribosyl-AMP cyclohydrolase (Clostridium botulinum (strain Kyoto / Type A2)).